A 289-amino-acid polypeptide reads, in one-letter code: Shikimate dehydrogenase (NADP(+)) (289 aa).

Residues 20–22 and Ser-67 each bind shikimate; that span reads SIS. Lys-71 serves as the catalytic Proton acceptor. Shikimate-binding residues include Asn-92 and Asp-107. NADP(+) contacts are provided by residues 132–136 and Val-230; that span reads GGGGA. Tyr-232 contacts shikimate. Gly-253 serves as a coordination point for NADP(+).

The protein belongs to the shikimate dehydrogenase family. Homodimer.

It catalyses the reaction shikimate + NADP(+) = 3-dehydroshikimate + NADPH + H(+). The protein operates within metabolic intermediate biosynthesis; chorismate biosynthesis; chorismate from D-erythrose 4-phosphate and phosphoenolpyruvate: step 4/7. Functionally, involved in the biosynthesis of the chorismate, which leads to the biosynthesis of aromatic amino acids. Catalyzes the reversible NADPH linked reduction of 3-dehydroshikimate (DHSA) to yield shikimate (SA). The polypeptide is Shikimate dehydrogenase (NADP(+)) (Streptococcus mutans serotype c (strain ATCC 700610 / UA159)).